We begin with the raw amino-acid sequence, 299 residues long: tRNA(Met) cytidine acetate ligase (299 aa).

ATP contacts are provided by residues isoleucine 6–methionine 19, glycine 100, asparagine 157, and arginine 182.

The protein belongs to the TmcAL family.

It is found in the cytoplasm. It carries out the reaction cytidine(34) in elongator tRNA(Met) + acetate + ATP = N(4)-acetylcytidine(34) in elongator tRNA(Met) + AMP + diphosphate. In terms of biological role, catalyzes the formation of N(4)-acetylcytidine (ac(4)C) at the wobble position of elongator tRNA(Met), using acetate and ATP as substrates. First activates an acetate ion to form acetyladenylate (Ac-AMP) and then transfers the acetyl group to tRNA to form ac(4)C34. This Mycoplasma mobile (strain ATCC 43663 / 163K / NCTC 11711) (Mesomycoplasma mobile) protein is tRNA(Met) cytidine acetate ligase.